We begin with the raw amino-acid sequence, 77 residues long: Conotoxin Vc6.14 (77 aa).

An N-terminal signal peptide occupies residues methionine 1–alanine 19. Positions methionine 20–serine 37 are excised as a propeptide. Intrachain disulfides connect cysteine 51–cysteine 65, cysteine 58–cysteine 69, and cysteine 64–cysteine 74.

It belongs to the conotoxin O2 superfamily. Expressed by the venom duct.

Its subcellular location is the secreted. Inhibits voltage-gated ion channels. The polypeptide is Conotoxin Vc6.14 (Conus victoriae (Queen Victoria cone)).